A 308-amino-acid chain; its full sequence is Ribosome maturation factor RimP (308 aa).

Disordered stretches follow at residues methionine 1–alanine 31, glutamate 94–glycine 113, and aspartate 249–arginine 308. Over residues alanine 17–alanine 31 the composition is skewed to low complexity. Gly residues predominate over residues aspartate 99–glycine 113. Positions aspartate 249 to tyrosine 269 are enriched in acidic residues.

It belongs to the RimP family.

The protein localises to the cytoplasm. Functionally, required for maturation of 30S ribosomal subunits. The polypeptide is Ribosome maturation factor RimP (Parafrankia sp. (strain EAN1pec)).